The following is a 466-amino-acid chain: MTFNTETFMLKNQAAIQLYEEVKRQPIFDYHCHLDPKDIFEDRIFDNIVDLWLGGDHYKWRLMRANGISEAEITGPASNLEKFKAFARTLERAYGNPVYHWSAMELKNVFGVNEILTESNAEEIYHRLNHFLKEHKISPRRLIADSKVMFIGTTDYPLDTLKWHKKLAADESFKTVVAPTFRPDEAFIEHRHFVDFITKLGDITQKEITDFSTFIAAMEERIAYFAQNGCRASDISFTEIVFEQTDELELNDLFNKVCEGYIPNQSEISKWQTAVFMELCRLYKKYGFVTQVHFGALRNNHSTIFEKLGADVGVDSLGDQVALTVNMNRLLDSLVKKDSLPKMIWYNLNPAYNIAVANTLANFQANELGVRSYLQFGAGWWFADTKLGMISQMNALAEQGMLANFIGMLTDSRSFLSYQRHDYFRRILCTYLGEWIEEGEVPEDYQALGSMAKDIAYQNAVNYFKN.

This sequence belongs to the metallo-dependent hydrolases superfamily. Uronate isomerase family.

The enzyme catalyses D-glucuronate = D-fructuronate. It catalyses the reaction aldehydo-D-galacturonate = keto-D-tagaturonate. Its pathway is carbohydrate metabolism; pentose and glucuronate interconversion. The sequence is that of Uronate isomerase from Streptococcus agalactiae serotype III (strain NEM316).